Reading from the N-terminus, the 338-residue chain is Limbic system-associated membrane protein (338 aa).

The N-terminal stretch at 1-28 (MVGRVQPDRKQLPLVLLRLLCLLPTGLP) is a signal peptide. Ig-like C2-type domains follow at residues 29–122 (VRSV…PKTS), 132–214 (PKIS…VKVT), and 219–304 (PTIT…ASLV). Asn-40 and Asn-66 each carry an N-linked (GlcNAc...) asparagine glycan. Cys-53 and Cys-111 are oxidised to a cystine. A Phosphotyrosine modification is found at Tyr-94. Asn-136 and Asn-148 each carry an N-linked (GlcNAc...) asparagine glycan. Intrachain disulfides connect Cys-153–Cys-197 and Cys-239–Cys-290. N-linked (GlcNAc...) asparagine glycosylation is found at Asn-279, Asn-287, and Asn-300. Asn-315 carries GPI-anchor amidated asparagine; alternate lipidation. A glycan (N-linked (GlcNAc...) asparagine; alternate) is linked at Asn-315. The propeptide at 316-338 (GSISLAVPLWLLAASLFCLLSKC) is removed in mature form.

The protein belongs to the immunoglobulin superfamily. IgLON family. Expressed mostly by neurons comprising limbic-associated cortical and subcortical regions that function in cognition, emotion, memory, and learning.

Its subcellular location is the cell membrane. Its function is as follows. Mediates selective neuronal growth and axon targeting. Contributes to the guidance of developing axons and remodeling of mature circuits in the limbic system. Essential for normal growth of the hippocampal mossy fiber projection. The sequence is that of Limbic system-associated membrane protein (Lsamp) from Rattus norvegicus (Rat).